Consider the following 163-residue polypeptide: MDGFLDLYLQFNIPSPIEEATWRHWFEIWLKELGVQEPCELSLCLTSDEHIRQLNREFRHLDEPTDVLAFAAQEMLAPFGIQDITGVRLLGDIVISVPTARAQAKAQGHRLSQELAWLASHGLLHLLGWDHPDELSLQRMLQQQRQLLAAIQLDGEVAHGQQP.

His-121, His-125, and His-131 together coordinate Zn(2+).

This sequence belongs to the endoribonuclease YbeY family. It depends on Zn(2+) as a cofactor.

Its subcellular location is the cytoplasm. In terms of biological role, single strand-specific metallo-endoribonuclease involved in late-stage 70S ribosome quality control and in maturation of the 3' terminus of the 16S rRNA. The polypeptide is Endoribonuclease YbeY (Synechococcus sp. (strain JA-2-3B'a(2-13)) (Cyanobacteria bacterium Yellowstone B-Prime)).